The following is a 429-amino-acid chain: Gamma-glutamyl phosphate reductase (429 aa).

It belongs to the gamma-glutamyl phosphate reductase family.

It localises to the cytoplasm. The catalysed reaction is L-glutamate 5-semialdehyde + phosphate + NADP(+) = L-glutamyl 5-phosphate + NADPH + H(+). Its pathway is amino-acid biosynthesis; L-proline biosynthesis; L-glutamate 5-semialdehyde from L-glutamate: step 2/2. Functionally, catalyzes the NADPH-dependent reduction of L-glutamate 5-phosphate into L-glutamate 5-semialdehyde and phosphate. The product spontaneously undergoes cyclization to form 1-pyrroline-5-carboxylate. The chain is Gamma-glutamyl phosphate reductase from Nocardioides sp. (strain ATCC BAA-499 / JS614).